A 244-amino-acid polypeptide reads, in one-letter code: DNA repair protein RecO (244 aa).

It belongs to the RecO family.

In terms of biological role, involved in DNA repair and RecF pathway recombination. The polypeptide is DNA repair protein RecO (Ehrlichia chaffeensis (strain ATCC CRL-10679 / Arkansas)).